Reading from the N-terminus, the 882-residue chain is Translation initiation factor IF-2 (882 aa).

The segment at 50–299 is disordered; it reads SFKSANTTKP…KERPLPETLV (250 aa). Basic and acidic residues-rich tracts occupy residues 60–71 and 84–96; these read STEKDSKNSSRK and RRRD…DNRH. The span at 97–108 shows a compositional bias: basic residues; it reads GNNKRRNNKFKK. Composition is skewed to basic and acidic residues over residues 109–133, 169–183, 232–242, and 250–263; these read QQND…DLLN, KKVE…EKLE, QKEETKPTRKK, and EVPD…EHSD. The span at 264–277 shows a compositional bias: basic residues; sequence KARRRRNKKNKRIN. Over residues 278 to 294 the composition is skewed to basic and acidic residues; that stretch reads QSKEIKKQPTQRKERPL. Residues 383-552 enclose the tr-type G domain; sequence KRPPVVTIMG…LLQADVMELK (170 aa). Positions 392–399 are G1; the sequence is GHVDHGKT. 392-399 serves as a coordination point for GTP; it reads GHVDHGKT. Positions 417–421 are G2; that stretch reads GITQK. The segment at 438–441 is G3; the sequence is DTPG. GTP-binding positions include 438–442 and 492–495; these read DTPGH and NKID. The interval 492–495 is G4; the sequence is NKID. The tract at residues 528 to 530 is G5; sequence SAK.

This sequence belongs to the TRAFAC class translation factor GTPase superfamily. Classic translation factor GTPase family. IF-2 subfamily.

The protein resides in the cytoplasm. In terms of biological role, one of the essential components for the initiation of protein synthesis. Protects formylmethionyl-tRNA from spontaneous hydrolysis and promotes its binding to the 30S ribosomal subunits. Also involved in the hydrolysis of GTP during the formation of the 70S ribosomal complex. This Lactobacillus gasseri (strain ATCC 33323 / DSM 20243 / BCRC 14619 / CIP 102991 / JCM 1131 / KCTC 3163 / NCIMB 11718 / NCTC 13722 / AM63) protein is Translation initiation factor IF-2.